A 199-amino-acid polypeptide reads, in one-letter code: Holliday junction branch migration complex subunit RuvA (199 aa).

The tract at residues 1 to 65 (MIGWLHGQII…EDALLLYGFL (65 aa)) is domain I. Residues 66–144 (DKEERSLFRS…QFDGSVSDTF (79 aa)) are domain II. The segment at 144-148 (FQKQA) is flexible linker. The tract at residues 149-199 (GSTHSQQEAISALEALGYKPQEAWKVVNKIDNGNKSCEQLIREALQILSSR) is domain III.

Belongs to the RuvA family. As to quaternary structure, homotetramer. Forms an RuvA(8)-RuvB(12)-Holliday junction (HJ) complex. HJ DNA is sandwiched between 2 RuvA tetramers; dsDNA enters through RuvA and exits via RuvB. An RuvB hexamer assembles on each DNA strand where it exits the tetramer. Each RuvB hexamer is contacted by two RuvA subunits (via domain III) on 2 adjacent RuvB subunits; this complex drives branch migration. In the full resolvosome a probable DNA-RuvA(4)-RuvB(12)-RuvC(2) complex forms which resolves the HJ.

The protein resides in the cytoplasm. The RuvA-RuvB-RuvC complex processes Holliday junction (HJ) DNA during genetic recombination and DNA repair, while the RuvA-RuvB complex plays an important role in the rescue of blocked DNA replication forks via replication fork reversal (RFR). RuvA specifically binds to HJ cruciform DNA, conferring on it an open structure. The RuvB hexamer acts as an ATP-dependent pump, pulling dsDNA into and through the RuvAB complex. HJ branch migration allows RuvC to scan DNA until it finds its consensus sequence, where it cleaves and resolves the cruciform DNA. This is Holliday junction branch migration complex subunit RuvA from Legionella pneumophila (strain Paris).